The primary structure comprises 207 residues: Glycerol-3-phosphate acyltransferase (207 aa).

The next 5 membrane-spanning stretches (helical) occupy residues 2–22 (ILVL…GVVI), 47–67 (MLGP…GTLA), 72–92 (ILFG…AVFG), 121–141 (FFVI…MVSV), and 155–175 (LVYH…VFLI).

It belongs to the PlsY family. As to quaternary structure, probably interacts with PlsX.

It is found in the cell membrane. The catalysed reaction is an acyl phosphate + sn-glycerol 3-phosphate = a 1-acyl-sn-glycero-3-phosphate + phosphate. Its pathway is lipid metabolism; phospholipid metabolism. Catalyzes the transfer of an acyl group from acyl-phosphate (acyl-PO(4)) to glycerol-3-phosphate (G3P) to form lysophosphatidic acid (LPA). This enzyme utilizes acyl-phosphate as fatty acyl donor, but not acyl-CoA or acyl-ACP. This Lacticaseibacillus casei (strain BL23) (Lactobacillus casei) protein is Glycerol-3-phosphate acyltransferase.